The sequence spans 424 residues: Serine--tRNA ligase (424 aa).

231-233 (TAE) lines the L-serine pocket. An ATP-binding site is contributed by 262-264 (RSE). Glutamate 285 is a binding site for L-serine. An ATP-binding site is contributed by 349-352 (EISS). Serine 385 provides a ligand contact to L-serine.

Belongs to the class-II aminoacyl-tRNA synthetase family. Type-1 seryl-tRNA synthetase subfamily. Homodimer. The tRNA molecule binds across the dimer.

Its subcellular location is the cytoplasm. The enzyme catalyses tRNA(Ser) + L-serine + ATP = L-seryl-tRNA(Ser) + AMP + diphosphate + H(+). It catalyses the reaction tRNA(Sec) + L-serine + ATP = L-seryl-tRNA(Sec) + AMP + diphosphate + H(+). It participates in aminoacyl-tRNA biosynthesis; selenocysteinyl-tRNA(Sec) biosynthesis; L-seryl-tRNA(Sec) from L-serine and tRNA(Sec): step 1/1. Functionally, catalyzes the attachment of serine to tRNA(Ser). Is also able to aminoacylate tRNA(Sec) with serine, to form the misacylated tRNA L-seryl-tRNA(Sec), which will be further converted into selenocysteinyl-tRNA(Sec). The protein is Serine--tRNA ligase of Bacillus cereus (strain B4264).